The sequence spans 617 residues: Hemagglutinin glycoprotein (617 aa).

The Intravirion portion of the chain corresponds to Met1–Val37. The tract at residues Met1–Cys154 is stalk. A helical; Signal-anchor for type II membrane protein membrane pass occupies residues Leu38–Ile58. At Arg59–Arg617 the chain is on the virion surface side. 5 N-linked (GlcNAc...) asparagine; by host glycosylation sites follow: Asn168, Asn187, Asn200, Asn215, and Asn238. 5 disulfide bridges follow: Cys188-Cys606, Cys287-Cys300, Cys381-Cys494, Cys386-Cys394, and Cys570-Cys579. Positions Pro458 to Tyr543 are interaction with host NECTIN4 receptor.

This sequence belongs to the paramyxoviruses hemagglutinin-neuraminidase family. Non-sialidase subfamily. In terms of assembly, homodimer; disulfide-linked. Further forms homotetramer (dimer of dimers). Interacts (via C-terminus) with human NECTIN4 (via N-terminus); this interaction allows attachment to the respiratory epithelium and viral entry. Interacts (via C-terminus) with human SLAMF1/CD150 (via N-terminus); this interaction allows attachment and viral entry into the CD150-expressing immune cells.

It localises to the virion membrane. The protein resides in the host cell membrane. Functionally, attaches the virus to the human SLAMF1/CD150 receptor for entry into host dendritic cells, macrophages, activated memory T cells and naive or memory B cells, thereby explaining the long immunosuppression that follows infection. In the respiratory airways, binds to the NECTIN4 receptor for entry into the host cell. Binding of H protein to the receptor induces a conformational change that allows the F protein to trigger virion/cell membranes fusion. The vaccine and laboratory-adapted strains use host CD46 as an alternate receptor. The high degree of interaction between H and CD46 results in down-regulation of the latter from the surface of infected cells, rendering them more sensitive to c3b-mediated complement lysis. The protein is Hemagglutinin glycoprotein (H) of Homo sapiens (Human).